We begin with the raw amino-acid sequence, 325 residues long: Aquaporin-8 (325 aa).

Over 1-10 the chain is Cytoplasmic; that stretch reads MALRSPARDY. A helical membrane pass occupies residues 11–31; sequence LVSMIGELVGTFLFLFFAFAA. Residues 32-52 are Extracellular-facing; that stretch reads AQTANQPNGTKPLTPNATDTS. N-linked (GlcNAc...) asparagine glycans are attached at residues Asn39 and Asn47. A helical transmembrane segment spans residues 53–73; it reads KLLYIALAFGASLAANVWVFF. At 74–100 the chain is on the cytoplasmic side; that stretch reads RVSGGQFNPAVTLALVLIRAVSPTKAL. The NPA 1 signature appears at 81-83; sequence NPA. A helical transmembrane segment spans residues 101–121; it reads ILIPAQLVGGSLAAAAVKGII. Residues 122-140 lie on the Extracellular side of the membrane; the sequence is PGDDILFAVSLGPGVANVQ. A helical membrane pass occupies residues 141–161; it reads GLFIELLLTFMLVFTILMLVA. The Cytoplasmic segment spans residues 162 to 167; that stretch reads EKTKST. A helical transmembrane segment spans residues 168–188; sequence FVAPIGIGFSLFIGHLVGIFW. At 189 to 212 the chain is on the extracellular side; it reads TGAGINPARAFSPALIQASFPSYH. Positions 194–196 match the NPA 2 motif; it reads NPA. Residues 213–233 traverse the membrane as a helical segment; that stretch reads WIYWLGPALGSFLAAGLYLGL. The Cytoplasmic portion of the chain corresponds to 234–325; the sequence is KEMKYELVGG…GSPDSTDLPT (92 aa). 2 disordered regions span residues 279-298 and 305-325; these read LGQF…LERG and EDDP…DLPT. Residues 286–298 show a composition bias toward basic and acidic residues; sequence TEGHRSPVDLERG.

The protein belongs to the MIP/aquaporin (TC 1.A.8) family.

Its subcellular location is the cell membrane. The catalysed reaction is H2O2(out) = H2O2(in). It carries out the reaction H2O(in) = H2O(out). In terms of biological role, plasma membrane water channel that regulates the reactive oxygen species (ROS)-signaling pathway through its capacity to act as a membrane channel for hydrogen peroxide uptake. Required for the formation of infection structures and infection, especially on host leaves where it is essential for the penetration into the host. Regulates the expression of proteins related to redox-regulation and intracellular signal transduction and plays a role in the distribution of mitochondria in the hyphae. The protein is Aquaporin-8 of Botryotinia fuckeliana (strain B05.10) (Noble rot fungus).